Here is a 752-residue protein sequence, read N- to C-terminus: DNA topoisomerase 4 subunit A (752 aa).

The region spanning 31–494 (LPFIGDGLKP…EAKAMSEHDM (464 aa)) is the Topo IIA-type catalytic domain. The active-site O-(5'-phospho-DNA)-tyrosine intermediate is the Tyr120. Residues 472–492 (YGDDRRSPLREREEAKAMSEH) are disordered. A compositionally biased stretch (basic and acidic residues) spans 473–492 (GDDRRSPLREREEAKAMSEH).

This sequence belongs to the type II topoisomerase GyrA/ParC subunit family. ParC type 1 subfamily. As to quaternary structure, heterotetramer composed of ParC and ParE.

The protein resides in the cell membrane. The enzyme catalyses ATP-dependent breakage, passage and rejoining of double-stranded DNA.. Its function is as follows. Topoisomerase IV is essential for chromosome segregation. It relaxes supercoiled DNA. Performs the decatenation events required during the replication of a circular DNA molecule. This is DNA topoisomerase 4 subunit A from Salmonella typhimurium (strain LT2 / SGSC1412 / ATCC 700720).